The chain runs to 241 residues: Ion-translocating oxidoreductase complex subunit E (241 aa).

The next 6 membrane-spanning stretches (helical) occupy residues 22 to 42 (LLGL…IGLG), 69 to 89 (IPIY…VIKA), 91 to 111 (AFNL…NCIV), 124 to 144 (VLVS…TMFL), 157 to 177 (LFFG…IEVL), and 182 to 202 (VFLL…VLAG).

It belongs to the NqrDE/RnfAE family. As to quaternary structure, the complex is composed of six subunits: RnfA, RnfB, RnfC, RnfD, RnfE and RnfG.

Its subcellular location is the cell inner membrane. In terms of biological role, part of a membrane-bound complex that couples electron transfer with translocation of ions across the membrane. This chain is Ion-translocating oxidoreductase complex subunit E, found in Buchnera aphidicola subsp. Baizongia pistaciae (strain Bp).